Consider the following 71-residue polypeptide: Beta-defensin 7 (71 aa).

A signal peptide spans 1 to 22 (MRIHYVLFAFLLVLLSPFAAFS). Pyrrolidone carboxylic acid is present on Gln23. Positions 23 to 25 (QDI) are excised as a propeptide. Intrachain disulfides connect Cys31-Cys58, Cys38-Cys52, and Cys42-Cys59.

It belongs to the beta-defensin family. LAP/TAP subfamily.

The protein resides in the secreted. In terms of biological role, has bactericidal activity. This Mus musculus (Mouse) protein is Beta-defensin 7 (Defb7).